The sequence spans 503 residues: Apolipoprotein N-acyltransferase (503 aa).

A run of 7 helical transmembrane segments spans residues 13 to 32, 34 to 54, 63 to 83, 102 to 122, 124 to 144, 173 to 193, and 203 to 223; these read RWRGLVSLFLSVLSGFLTAL, MPGFLSGALIWFSLIPLLYAV, AFLSFVYFFTHVLISFFWVLP, IVVFVLMGIIEAVPFLGFGFL, YFAPQSIVLKTLYLASVYTIF, IVSITGTLGLVFLIVSLNVLF, and LLIFPVIFFVYLLNSSVVHLL. A CN hydrolase domain is found at 231–460; that stretch reads FKVVALQPNV…RLAGEFHIKA (230 aa). The Proton acceptor role is filled by glutamate 273. Lysine 321 is an active-site residue. The active-site Nucleophile is cysteine 371. A helical membrane pass occupies residues 468–488; the sequence is VRYGDWFFYLSVILAVVSVFI.

This sequence belongs to the CN hydrolase family. Apolipoprotein N-acyltransferase subfamily.

The protein localises to the cell inner membrane. The enzyme catalyses N-terminal S-1,2-diacyl-sn-glyceryl-L-cysteinyl-[lipoprotein] + a glycerophospholipid = N-acyl-S-1,2-diacyl-sn-glyceryl-L-cysteinyl-[lipoprotein] + a 2-acyl-sn-glycero-3-phospholipid + H(+). The protein operates within protein modification; lipoprotein biosynthesis (N-acyl transfer). In terms of biological role, catalyzes the phospholipid dependent N-acylation of the N-terminal cysteine of apolipoprotein, the last step in lipoprotein maturation. This is Apolipoprotein N-acyltransferase from Thermotoga maritima (strain ATCC 43589 / DSM 3109 / JCM 10099 / NBRC 100826 / MSB8).